The primary structure comprises 307 residues: Oxygen-dependent coproporphyrinogen-III oxidase (307 aa).

S99 contributes to the substrate binding site. Positions 103 and 113 each coordinate a divalent metal cation. H113 acts as the Proton donor in catalysis. Position 115-117 (115-117) interacts with substrate; the sequence is NVR. The a divalent metal cation site is built by H152 and H182. Positions 247 to 282 are important for dimerization; it reads YVEFNLVFDRGTLFGLQSGGRTESILMSMPPVANWR. 265-267 serves as a coordination point for substrate; it reads GGR.

It belongs to the aerobic coproporphyrinogen-III oxidase family. As to quaternary structure, homodimer. The cofactor is a divalent metal cation.

The protein resides in the cytoplasm. It catalyses the reaction coproporphyrinogen III + O2 + 2 H(+) = protoporphyrinogen IX + 2 CO2 + 2 H2O. Its pathway is porphyrin-containing compound metabolism; protoporphyrin-IX biosynthesis; protoporphyrinogen-IX from coproporphyrinogen-III (O2 route): step 1/1. Functionally, involved in the heme biosynthesis. Catalyzes the aerobic oxidative decarboxylation of propionate groups of rings A and B of coproporphyrinogen-III to yield the vinyl groups in protoporphyrinogen-IX. This is Oxygen-dependent coproporphyrinogen-III oxidase from Burkholderia orbicola (strain MC0-3).